The primary structure comprises 378 residues: tRNA (guanine(37)-N(1))-methyltransferase (378 aa).

Residues His196, 234 to 235 (DL), 262 to 263 (DA), and Asn282 each bind S-adenosyl-L-methionine.

The protein belongs to the class I-like SAM-binding methyltransferase superfamily. TRM5/TYW2 family. In terms of assembly, monomer.

The protein resides in the mitochondrion matrix. Its subcellular location is the nucleus. The protein localises to the cytoplasm. It carries out the reaction guanosine(37) in tRNA + S-adenosyl-L-methionine = N(1)-methylguanosine(37) in tRNA + S-adenosyl-L-homocysteine + H(+). Its function is as follows. Specifically methylates the N1 position of guanosine-37 in various cytoplasmic and mitochondrial tRNAs. Methylation is not dependent on the nature of the nucleoside 5' of the target nucleoside. This is the first step in the biosynthesis of wybutosine (yW), a modified base adjacent to the anticodon of tRNAs and required for accurate decoding. This chain is tRNA (guanine(37)-N(1))-methyltransferase, found in Trichomonas vaginalis (strain ATCC PRA-98 / G3).